The chain runs to 425 residues: Enolase (425 aa).

Glutamine 163 provides a ligand contact to (2R)-2-phosphoglycerate. Glutamate 205 (proton donor) is an active-site residue. Mg(2+) contacts are provided by aspartate 242, glutamate 285, and aspartate 312. Positions 337, 366, 367, and 388 each coordinate (2R)-2-phosphoglycerate. The active-site Proton acceptor is lysine 337.

Belongs to the enolase family. Mg(2+) is required as a cofactor.

It is found in the cytoplasm. The protein resides in the secreted. It localises to the cell surface. It catalyses the reaction (2R)-2-phosphoglycerate = phosphoenolpyruvate + H2O. It functions in the pathway carbohydrate degradation; glycolysis; pyruvate from D-glyceraldehyde 3-phosphate: step 4/5. In terms of biological role, catalyzes the reversible conversion of 2-phosphoglycerate (2-PG) into phosphoenolpyruvate (PEP). It is essential for the degradation of carbohydrates via glycolysis. This is Enolase from Jannaschia sp. (strain CCS1).